A 104-amino-acid chain; its full sequence is Large ribosomal subunit protein eL42 (104 aa).

A disordered region spans residues 22–56 (KVSQAKKSKDNPRAQGNRRYARKQRGYGGQTKPIL).

Belongs to the eukaryotic ribosomal protein eL42 family.

The sequence is that of Large ribosomal subunit protein eL42 (RPL44) from Encephalitozoon cuniculi (strain GB-M1) (Microsporidian parasite).